The primary structure comprises 61 residues: Large ribosomal subunit protein uL30 (61 aa).

It belongs to the universal ribosomal protein uL30 family. Part of the 50S ribosomal subunit.

The polypeptide is Large ribosomal subunit protein uL30 (Corynebacterium aurimucosum (strain ATCC 700975 / DSM 44827 / CIP 107346 / CN-1) (Corynebacterium nigricans)).